The sequence spans 179 residues: Cytochrome b6-f complex iron-sulfur subunit (179 aa).

Residues 20-42 (LLTFGTITGVAAGALYPIVKYFI) form a helical membrane-spanning segment. One can recognise a Rieske domain in the interval 60–161 (GNDVIVSQFL…ANVTDNDKVV (102 aa)). [2Fe-2S] cluster is bound by residues cysteine 107, histidine 109, cysteine 125, and histidine 128. An intrachain disulfide couples cysteine 112 to cysteine 127.

It belongs to the Rieske iron-sulfur protein family. As to quaternary structure, the 4 large subunits of the cytochrome b6-f complex are cytochrome b6, subunit IV (17 kDa polypeptide, PetD), cytochrome f and the Rieske protein, while the 4 small subunits are PetG, PetL, PetM and PetN. The complex functions as a dimer. The cofactor is [2Fe-2S] cluster.

Its subcellular location is the cellular thylakoid membrane. The catalysed reaction is 2 oxidized [plastocyanin] + a plastoquinol + 2 H(+)(in) = 2 reduced [plastocyanin] + a plastoquinone + 4 H(+)(out). Functionally, component of the cytochrome b6-f complex, which mediates electron transfer between photosystem II (PSII) and photosystem I (PSI), cyclic electron flow around PSI, and state transitions. The sequence is that of Cytochrome b6-f complex iron-sulfur subunit from Microcystis aeruginosa (strain NIES-843 / IAM M-2473).